The following is a 713-amino-acid chain: Polyribonucleotide nucleotidyltransferase (713 aa).

The Mg(2+) site is built by aspartate 487 and aspartate 493. In terms of domain architecture, KH spans 554-613 (PRIEVMNIPVDKIREVIGSGGKVIREIVEKTGAKINIEDDGTVKIASASGKEIEAARKWI). The S1 motif domain maps to 623 to 691 (GQIYEGTVVK…ERGKVRLSMK (69 aa)).

Belongs to the polyribonucleotide nucleotidyltransferase family. Requires Mg(2+) as cofactor.

The protein resides in the cytoplasm. The catalysed reaction is RNA(n+1) + phosphate = RNA(n) + a ribonucleoside 5'-diphosphate. Functionally, involved in mRNA degradation. Catalyzes the phosphorolysis of single-stranded polyribonucleotides processively in the 3'- to 5'-direction. This Agrobacterium fabrum (strain C58 / ATCC 33970) (Agrobacterium tumefaciens (strain C58)) protein is Polyribonucleotide nucleotidyltransferase.